The chain runs to 201 residues: Small ribosomal subunit protein uS4c (201 aa).

The region spanning 89 to 150 is the S4 RNA-binding domain; the sequence is MRLDNILFRL…KERSKALIQN (62 aa).

This sequence belongs to the universal ribosomal protein uS4 family. Part of the 30S ribosomal subunit. Contacts protein S5. The interaction surface between S4 and S5 is involved in control of translational fidelity.

It localises to the plastid. The protein resides in the chloroplast. Its function is as follows. One of the primary rRNA binding proteins, it binds directly to 16S rRNA where it nucleates assembly of the body of the 30S subunit. With S5 and S12 plays an important role in translational accuracy. In Phalaenopsis aphrodite subsp. formosana (Moth orchid), this protein is Small ribosomal subunit protein uS4c (rps4).